A 327-amino-acid polypeptide reads, in one-letter code: Neurogenic differentiation factor 6-A (327 aa).

The disordered stretch occupies residues 17–85 (GANFPRDCVG…KKMTKARVDR (69 aa)). A compositionally biased stretch (basic and acidic residues) spans 24–46 (CVGDLKGNKQEPFEKEETLSHVM). Over residues 47 to 63 (DDDDSEKDEDEREDGQD) the composition is skewed to acidic residues. Residues 68–80 (PRRRGPRKKKMTK) are compositionally biased toward basic residues. The Nuclear localization signal signature appears at 74-80 (RKKKMTK). The region spanning 88-140 (VRRMEANARERNRMHGLNNALDSLRKVVPCYSKTQKLSKIETLRLAKNYIWAL) is the bHLH domain.

In terms of assembly, efficient DNA binding requires dimerization with another bHLH protein. Embryonic olfactory bulbs. In adult, expressed in brain, eye, intestine, muscle, ovary and skin.

It localises to the nucleus. In terms of biological role, differentiation factor required for neurogenesis. Acts as an upstream activator of isl1. The sequence is that of Neurogenic differentiation factor 6-A from Danio rerio (Zebrafish).